Reading from the N-terminus, the 346-residue chain is Acetylpolyamine amidohydrolase 1 (346 aa).

The active-site Proton donor/acceptor is His161. Zn(2+) is bound by residues Asp197, His199, and Asp286.

Belongs to the histone deacetylase family. In terms of assembly, homodimer. The cofactor is Zn(2+).

The catalysed reaction is N-acetylputrescine + H2O = putrescine + acetate. It catalyses the reaction N-acetylcadaverine + H2O = cadaverine + acetate. The enzyme catalyses N(1)-acetylspermine + H2O = spermine + acetate. It carries out the reaction N(1)-acetylspermidine + H2O = spermidine + acetate. The protein operates within amine and polyamine metabolism. Its function is as follows. Catalyzes the deacetylation of acetylated polyamines such as N-acetylputrescine, N-acetylcadaverine, N(1)-acetylspermine and N(1)-acetylspermidine. Plays an important role in the metabolism of acetylated polyamines in P.aeruginosa. Is involved in the degradation pathways of N-acetylputrescine and N-acetylcadaverine, that allow P.aeruginosa to utilize these acetylpolyamines as a carbon source under glucose starvation. In vitro, can also hydrolyze artificial trifluoroacetylated and acetylated lysine-derivatives. The protein is Acetylpolyamine amidohydrolase 1 of Pseudomonas aeruginosa (strain ATCC 15692 / DSM 22644 / CIP 104116 / JCM 14847 / LMG 12228 / 1C / PRS 101 / PAO1).